The sequence spans 104 residues: Large ribosomal subunit protein bL21 (104 aa).

It belongs to the bacterial ribosomal protein bL21 family. Part of the 50S ribosomal subunit. Contacts protein L20.

Its function is as follows. This protein binds to 23S rRNA in the presence of protein L20. The chain is Large ribosomal subunit protein bL21 from Agrobacterium fabrum (strain C58 / ATCC 33970) (Agrobacterium tumefaciens (strain C58)).